A 239-amino-acid chain; its full sequence is Large ribosomal subunit protein bL25 (239 aa).

Positions 217-239 (IKAEAHAAEGTQAEGSTEEGQQQ) are disordered. Polar residues predominate over residues 229-239 (AEGSTEEGQQQ).

Belongs to the bacterial ribosomal protein bL25 family. CTC subfamily. Part of the 50S ribosomal subunit; part of the 5S rRNA/L5/L18/L25 subcomplex. Contacts the 5S rRNA. Binds to the 5S rRNA independently of L5 and L18.

Functionally, this is one of the proteins that binds to the 5S RNA in the ribosome where it forms part of the central protuberance. This is Large ribosomal subunit protein bL25 from Deinococcus deserti (strain DSM 17065 / CIP 109153 / LMG 22923 / VCD115).